Reading from the N-terminus, the 557-residue chain is Nicotinate phosphoribosyltransferase 2 (557 aa).

Nicotinate-binding residues include Tyr31 and Thr219. His222 carries the phosphohistidine modification. A nicotinate-binding site is contributed by Arg329. Thr391 contributes to the 5-phospho-alpha-D-ribose 1-diphosphate binding site.

Belongs to the NAPRTase family. The cofactor is Mg(2+). Mn(2+) is required as a cofactor. In terms of processing, transiently phosphorylated on a His residue during the reaction cycle. Phosphorylation strongly increases the affinity for substrates and increases the rate of nicotinate D-ribonucleotide production. Dephosphorylation regenerates the low-affinity form of the enzyme, leading to product release.

It catalyses the reaction nicotinate + 5-phospho-alpha-D-ribose 1-diphosphate + ATP + H2O = nicotinate beta-D-ribonucleotide + ADP + phosphate + diphosphate. Its pathway is cofactor biosynthesis; NAD(+) biosynthesis; nicotinate D-ribonucleotide from nicotinate: step 1/1. Functionally, catalyzes the first step in the biosynthesis of NAD from nicotinic acid, the ATP-dependent synthesis of beta-nicotinate D-ribonucleotide from nicotinate and 5-phospho-D-ribose 1-phosphate. Helps prevent cellular oxidative stress via its role in NAD biosynthesis. This is Nicotinate phosphoribosyltransferase 2 from Arabidopsis thaliana (Mouse-ear cress).